The primary structure comprises 464 residues: Serine/threonine-protein kinase 38-like (464 aa).

The residue at position 2 (alanine 2) is an N-acetylalanine. The tract at residues 64 to 89 (KLRRSQHARKETEFLRLKRTRLGLDD) is S100B binding. Threonine 75 bears the Phosphothreonine mark. In terms of domain architecture, Protein kinase spans 90-383 (FESLKVIGRG…VEEIKGHPFF (294 aa)). Residues 96-104 (IGRGAFGEV) and lysine 119 contribute to the ATP site. Aspartate 213 acts as the Proton acceptor in catalysis. Serine 282 carries the post-translational modification Phosphoserine; by autocatalysis. An AGC-kinase C-terminal domain is found at 384–453 (EGVDWGHIRE…KRFEGLTQRG (70 aa)). Threonine 442 is modified (phosphothreonine; by STK24/MST3).

It belongs to the protein kinase superfamily. AGC Ser/Thr protein kinase family. Homodimeric S100B binds two molecules of STK38L. Interacts with MOB1 and MOB2. Interacts with MICAL1; leading to inhibit the protein kinase activity by antagonizing activation by MST1/STK4. It depends on Mg(2+) as a cofactor. As to expression, highly expressed in the large and small intestine, stomach and testis. High levels also present in the brain, in particular the neurocortex, basal forebrain, hippocampus, the amygdala, cerebellum and brainstem.

It is found in the cytoplasm. It localises to the cytoskeleton. The protein localises to the membrane. It carries out the reaction L-seryl-[protein] + ATP = O-phospho-L-seryl-[protein] + ADP + H(+). The enzyme catalyses L-threonyl-[protein] + ATP = O-phospho-L-threonyl-[protein] + ADP + H(+). Its activity is regulated as follows. Activated by binding of S100B which releases autoinhibitory N-lobe interactions, enabling ATP to bind and the autophosphorylation of Ser-282. Thr-442 then undergoes calcium-dependent phosphorylation by STK24/MST3. Interactions between phosphorylated Thr-442 and the N-lobe promote additional structural changes that complete the activation of the kinase. Autoinhibition is also released by the binding of MOB1/MOBKL1A and MOB2 to the N-terminal of STK38L. Involved in the regulation of structural processes in differentiating and mature neuronal cells. This chain is Serine/threonine-protein kinase 38-like, found in Mus musculus (Mouse).